The following is a 121-amino-acid chain: Large ribosomal subunit protein bL12 (121 aa).

Belongs to the bacterial ribosomal protein bL12 family. In terms of assembly, homodimer. Part of the ribosomal stalk of the 50S ribosomal subunit. Forms a multimeric L10(L12)X complex, where L10 forms an elongated spine to which 2 to 4 L12 dimers bind in a sequential fashion. Binds GTP-bound translation factors.

Its function is as follows. Forms part of the ribosomal stalk which helps the ribosome interact with GTP-bound translation factors. Is thus essential for accurate translation. In Escherichia coli O81 (strain ED1a), this protein is Large ribosomal subunit protein bL12.